Here is a 349-residue protein sequence, read N- to C-terminus: Protein Wnt-7a (349 aa).

The first 31 residues, 1–31 (MNRKARRCLGHLFLSLGMVYLRIGGFSSVVA), serve as a signal peptide directing secretion. Disulfide bonds link cysteine 73/cysteine 84, cysteine 123/cysteine 131, cysteine 133/cysteine 152, cysteine 200/cysteine 214, and cysteine 202/cysteine 209. Asparagine 83 and asparagine 127 each carry an N-linked (GlcNAc...) asparagine glycan. Serine 206 is lipidated: O-palmitoleoyl serine; by PORCN. The interval 238-266 (VEPVRASRNKRPTFLKIKKPLSYRKPMDT) is disordered linker. Disulfide bonds link cysteine 278/cysteine 309, cysteine 294/cysteine 304, cysteine 308/cysteine 348, cysteine 324/cysteine 339, cysteine 326/cysteine 336, and cysteine 331/cysteine 332. A glycan (N-linked (GlcNAc...) asparagine) is linked at asparagine 295.

The protein belongs to the Wnt family. In terms of assembly, forms a soluble 1:1 complex with AFM; this prevents oligomerization and is required for prolonged biological activity. The complex with AFM may represent the physiological form in body fluids. Interacts with PORCN. Interacts (via intrinsically disordered linker region) with RECK; interaction with RECK confers ligand selectivity for Wnt7 in brain endothelial cells and allows these cells to selectively respond to Wnt7. Interacts with FZD5. In terms of processing, palmitoleoylation is required for efficient binding to frizzled receptors. Depalmitoleoylation leads to Wnt signaling pathway inhibition.

Its subcellular location is the secreted. It is found in the extracellular space. It localises to the extracellular matrix. Ligand for members of the frizzled family of seven transmembrane receptors that functions in the canonical Wnt/beta-catenin signaling pathway. Plays an important role in embryonic development, including dorsal versus ventral patterning during limb development, skeleton development and urogenital tract development. Required for central nervous system (CNS) angiogenesis and blood-brain barrier regulation. Required for normal, sexually dimorphic development of the Mullerian ducts, and for normal fertility in both sexes. Required for normal neural stem cell proliferation in the hippocampus dentate gyrus. Required for normal progress through the cell cycle in neural progenitor cells, for self-renewal of neural stem cells, and for normal neuronal differentiation and maturation. Promotes formation of synapses via its interaction with FZD5. The sequence is that of Protein Wnt-7a (WNT7A) from Pongo pygmaeus (Bornean orangutan).